Here is an 874-residue protein sequence, read N- to C-terminus: Alanine--tRNA ligase (874 aa).

The Zn(2+) site is built by H562, H566, C664, and H668.

Belongs to the class-II aminoacyl-tRNA synthetase family. The cofactor is Zn(2+).

It localises to the cytoplasm. It catalyses the reaction tRNA(Ala) + L-alanine + ATP = L-alanyl-tRNA(Ala) + AMP + diphosphate. Its function is as follows. Catalyzes the attachment of alanine to tRNA(Ala) in a two-step reaction: alanine is first activated by ATP to form Ala-AMP and then transferred to the acceptor end of tRNA(Ala). Also edits incorrectly charged Ser-tRNA(Ala) and Gly-tRNA(Ala) via its editing domain. This chain is Alanine--tRNA ligase, found in Shewanella loihica (strain ATCC BAA-1088 / PV-4).